A 370-amino-acid chain; its full sequence is tRNA-specific 2-thiouridylase MnmA (370 aa).

ATP is bound by residues 24-31 (AMSGGVDS) and Leu-50. The Nucleophile role is filled by Cys-119. A disulfide bond links Cys-119 and Cys-215. Gly-143 contacts ATP. The segment at 165 to 167 (KDQ) is interaction with tRNA. The Cysteine persulfide intermediate role is filled by Cys-215.

It belongs to the MnmA/TRMU family.

It is found in the cytoplasm. It carries out the reaction S-sulfanyl-L-cysteinyl-[protein] + uridine(34) in tRNA + AH2 + ATP = 2-thiouridine(34) in tRNA + L-cysteinyl-[protein] + A + AMP + diphosphate + H(+). Catalyzes the 2-thiolation of uridine at the wobble position (U34) of tRNA, leading to the formation of s(2)U34. In Wolbachia sp. subsp. Drosophila simulans (strain wRi), this protein is tRNA-specific 2-thiouridylase MnmA.